The chain runs to 222 residues: CEACAM1-like protein UL7 (222 aa).

N-linked (GlcNAc...) asparagine; by host glycans are attached at residues Asn-50, Asn-56, Asn-60, Asn-71, Asn-105, Asn-109, Asn-125, Asn-132, Asn-147, Asn-164, Asn-168, and Asn-189. The chain crosses the membrane as a helical span at residues 193–213 (LALVGVIVFIALIVVCIMGWW).

The protein belongs to the RL11 family. As to quaternary structure, interacts with host FLT3. In terms of processing, highly glycosylated.

The protein resides in the secreted. It localises to the host cell membrane. Plays a role in modulating the host immune response and affecting host cytokine production. Structurally and functionally homolog of host CEACAM1, induces endothelial cell angiogenesis. Ligands for host FLT3 receptor, activates the PI3K/AKT and MAPK/ERK pathways. In turn, triggers hematopoietic progenitor cell and monocyte differentiation leading to virus reactivation. The protein is CEACAM1-like protein UL7 (UL7) of Human cytomegalovirus (strain AD169) (HHV-5).